Here is a 433-residue protein sequence, read N- to C-terminus: Trigger factor (433 aa).

A PPIase FKBP-type domain is found at 163–248 (GDTVNIDFSG…VNEIKFKEVP (86 aa)).

The protein belongs to the FKBP-type PPIase family. Tig subfamily.

The protein resides in the cytoplasm. It carries out the reaction [protein]-peptidylproline (omega=180) = [protein]-peptidylproline (omega=0). In terms of biological role, involved in protein export. Acts as a chaperone by maintaining the newly synthesized protein in an open conformation. Functions as a peptidyl-prolyl cis-trans isomerase. The chain is Trigger factor from Staphylococcus aureus (strain COL).